The following is an 82-amino-acid chain: ATP synthase subunit c, chloroplastic (82 aa).

Transmembrane regions (helical) follow at residues 3 to 23 (PIIS…AAIG) and 57 to 77 (LAFM…LLFA).

The protein belongs to the ATPase C chain family. In terms of assembly, F-type ATPases have 2 components, F(1) - the catalytic core - and F(0) - the membrane proton channel. F(1) has five subunits: alpha(3), beta(3), gamma(1), delta(1), epsilon(1). F(0) has four main subunits: a(1), b(1), b'(1) and c(10-14). The alpha and beta chains form an alternating ring which encloses part of the gamma chain. F(1) is attached to F(0) by a central stalk formed by the gamma and epsilon chains, while a peripheral stalk is formed by the delta, b and b' chains.

It is found in the plastid. Its subcellular location is the chloroplast thylakoid membrane. Its function is as follows. F(1)F(0) ATP synthase produces ATP from ADP in the presence of a proton or sodium gradient. F-type ATPases consist of two structural domains, F(1) containing the extramembraneous catalytic core and F(0) containing the membrane proton channel, linked together by a central stalk and a peripheral stalk. During catalysis, ATP synthesis in the catalytic domain of F(1) is coupled via a rotary mechanism of the central stalk subunits to proton translocation. Key component of the F(0) channel; it plays a direct role in translocation across the membrane. A homomeric c-ring of between 10-14 subunits forms the central stalk rotor element with the F(1) delta and epsilon subunits. This Phaeodactylum tricornutum (strain CCAP 1055/1) protein is ATP synthase subunit c, chloroplastic.